A 479-amino-acid chain; its full sequence is Transcription factor CP2-like protein 1 (479 aa).

A Grh/CP2 DB domain is found at 43 to 280 (RLPPLQYVLC…PSPSYNGSPN (238 aa)). 2 disordered regions span residues 219–245 (KPKG…KEKY) and 271–301 (PSPS…LPVG). A compositionally biased stretch (basic and acidic residues) spans 221 to 245 (KGADRKQKTDREKMEKRTAQEKEKY). The segment at 261–365 (PDVAYQVNSA…IRLFNAIKGR (105 aa)) is SAM2-like domain. Residues 271–281 (PSPSYNGSPNS) are compositionally biased toward polar residues.

This sequence belongs to the grh/CP2 family. CP2 subfamily. In terms of assembly, forms homohexamers via its SAM-like domain. Interacts with MTA1; which is indispensable for TFCP2l1-mediated self-renewal-promoting effect and endoderm-inhibiting action. Highly expressed in placental JEG-3 cells and very low levels of expression in non-steroidogenic cells. No expression was seen in adrenal NCI-H295A cells or in adrenal tissue.

The protein resides in the nucleus. Its function is as follows. Transcription factor that facilitates establishment and maintenance of pluripotency in embryonic stem cells (ESCs). With KLF2, acts as the major effector of self-renewal that mediates induction of pluripotency downstream of LIF/STAT3 and Wnt/beta-catenin signaling. Required for normal duct development in the salivary gland and kidney. Coordinates the development of the kidney collecting ducts intercalated (IC) and principal (PC) cells, which regulate acid-base and salt-water homeostasis, respectively. Regulates the expression of IC genes including subunits B1 and D2 of the V-ATPase complex, OXGR1, CA12, SLC4A1, AQP6 and IC-specific transcription factor FOXI1. Also regulates the expression of JAG1 and subsequent notch signaling in the collecting duct. JAG1 initiates notch signaling in PCs but inhibits notch signaling in ICs. Acts as a transcriptional suppressor that may suppress UBP1-mediated transcriptional activation. Modulates the placental expression of CYP11A1. This is Transcription factor CP2-like protein 1 (TFCP2L1) from Homo sapiens (Human).